Consider the following 141-residue polypeptide: Hemoglobin subunit alpha (141 aa).

One can recognise a Globin domain in the interval 1-141 (VLSDNDKTNV…VSTVLTSKYR (141 aa)). Ser-3 bears the Phosphoserine mark. At Lys-7 the chain carries N6-succinyllysine. Thr-8 carries the phosphothreonine modification. Position 11 is an N6-succinyllysine (Lys-11). Lys-16 is subject to N6-acetyllysine; alternate. The residue at position 16 (Lys-16) is an N6-succinyllysine; alternate. Phosphotyrosine is present on Tyr-24. Residue Ser-35 is modified to Phosphoserine. Lys-40 carries the N6-succinyllysine modification. Residue His-58 coordinates O2. Position 87 (His-87) interacts with heme b. Ser-102 carries the post-translational modification Phosphoserine. Residue Thr-108 is modified to Phosphothreonine. Ser-124 bears the Phosphoserine mark. Phosphothreonine occurs at positions 134 and 137. A Phosphoserine modification is found at Ser-138.

It belongs to the globin family. In terms of assembly, heterotetramer of two alpha chains and two beta chains. Red blood cells.

Involved in oxygen transport from the lung to the various peripheral tissues. Its function is as follows. Hemopressin acts as an antagonist peptide of the cannabinoid receptor CNR1. Hemopressin-binding efficiently blocks cannabinoid receptor CNR1 and subsequent signaling. This is Hemoglobin subunit alpha (HBA) from Loxodonta africana (African elephant).